A 200-amino-acid chain; its full sequence is MITVVESSFLTSASALSQTPPPKNSEVVFIGRSNVGKSTLINLIVDSKGLAKSSSTPGKTQLINYFETIWKRGEERIPLWLVDLPGFGYAKVSKEMRKDWGEKLIHFLQERRSIKLFVQLIDARHPDLAIDAEAWAMIGAIKRGDQKVIRVFTKMDKLNRNDQKKLQQRYPDACFTAMLGKEGIASVRERVLKDVLGEEA.

Residues 23–197 (KNSEVVFIGR…RERVLKDVLG (175 aa)) form the EngB-type G domain. Residues 31–38 (GRSNVGKS), 58–62 (GKTQL), 83–86 (DLPG), 153–156 (TKMD), and 175–177 (FTA) contribute to the GTP site. Mg(2+) is bound by residues S38 and T60.

The protein belongs to the TRAFAC class TrmE-Era-EngA-EngB-Septin-like GTPase superfamily. EngB GTPase family. The cofactor is Mg(2+).

Its function is as follows. Necessary for normal cell division and for the maintenance of normal septation. In Wolinella succinogenes (strain ATCC 29543 / DSM 1740 / CCUG 13145 / JCM 31913 / LMG 7466 / NCTC 11488 / FDC 602W) (Vibrio succinogenes), this protein is Probable GTP-binding protein EngB.